The sequence spans 341 residues: Muscleblind-like protein 1 (341 aa).

A Phosphothreonine modification is found at Thr-6. 4 C3H1-type zinc fingers span residues 13–41 (WLTL…HPSK), 47–73 (NGRV…HPPP), 178–206 (TDRL…HPAD), and 214–240 (DNTV…HPPA).

This sequence belongs to the muscleblind family. In terms of assembly, interacts with DDX1 and YBX1. Interacts with HNRNPH1; the interaction in RNA-independent. Interacts with RBPMS; the interaction allows cooperative assembly of RNA-bound stable cell-specific alternative splicing regulatory complexes. As to expression, highly expressed in cardiac and skeletal muscle. Weakly expressed in heart and eye (at protein level).

It localises to the nucleus. The protein resides in the cytoplasm. Its subcellular location is the cytoplasmic granule. Mediates pre-mRNA alternative splicing regulation. Acts either as activator or repressor of splicing on specific pre-mRNA targets. Inhibits cardiac troponin-T (TNNT2) pre-mRNA exon inclusion but induces insulin receptor (IR) pre-mRNA exon inclusion in muscle. Antagonizes the alternative splicing activity pattern of CELF proteins. Regulates the TNNT2 exon 5 skipping through competition with U2AF2. Inhibits the formation of the spliceosome A complex on intron 4 of TNNT2 pre-mRNA. Binds to the stem-loop structure within the polypyrimidine tract of TNNT2 intron 4 during spliceosome assembly. Binds to the 5'-YGCU(U/G)Y-3'consensus sequence. Binds to the IR RNA. Binds to CUG triplet repeat expansion in myotonic dystrophy muscle cells by sequestering the target RNAs. Together with RNA binding proteins RBPMS and RBFOX2, activates vascular smooth muscle cells alternative splicing events. Regulates NCOR2 alternative splicing. The sequence is that of Muscleblind-like protein 1 (Mbnl1) from Mus musculus (Mouse).